The sequence spans 198 residues: MTLRCLEPSGNGADRTRSQWGTAGSPEDQSPEAARLAKALRELSQTGWYWGSMTVNEAKEKLKEAPEGTFLIRDSSHSDYLLTISVKTSAGPTNLRIEYQDGKFRLDSIICVKSKLKQFDSVVHLIDYYVQMCKDKRTGPEAPRNGTVHLYLTKPLYTSAPTLQHFCRLSINKCTGTIRGLPLPTRLKDYLEEYKFQV.

The interval 1-31 (MTLRCLEPSGNGADRTRSQWGTAGSPEDQSP) is disordered. Residues 1–75 (MTLRCLEPSG…PEGTFLIRDS (75 aa)) are interaction with AREL1. Phosphoserine occurs at positions 30 and 52. An SH2 domain is found at 48 to 156 (WYWGSMTVNE…TVHLYLTKPL (109 aa)). Positions 151–197 (YLTKPLYTSAPTLQHFCRLSINKCTGTIRGLPLPTRLKDYLEEYKFQ) constitute an SOCS box domain. Residue K173 forms a Glycyl lysine isopeptide (Lys-Gly) (interchain with G-Cter in ubiquitin) linkage.

In terms of assembly, substrate-recognition component of the ECS(SOCS2) complex, composed of SOCS2, CUL5, ELOB, ELOC and RNF7/RBX2. Interacts with IGF1R. Interacts with DCUN1D1. Ubiquitinated; mediated by AREL1 and leading to its subsequent proteasomal degradation. Ubiquitination is dependent on its phosphorylation at Ser-52, by PKC. Ubiquitination is stimulated by LPS. In terms of processing, phosphorylation at Ser-52 by PKC facilitates its ubiquitination and proteasomal degradation.

The protein localises to the cytoplasm. Its pathway is protein modification; protein ubiquitination. Its function is as follows. Substrate-recognition component of a cullin-5-RING E3 ubiquitin-protein ligase complex (ECS complex, also named CRL5 complex), which mediates the ubiquitination and subsequent proteasomal degradation of target proteins, such as EPOR and GHR. Specifically recognizes and binds phosphorylated proteins via its SH2 domain, promoting their ubiquitination. The ECS(SOCS2) complex acts as a key regulator of growth hormone receptor (GHR) levels by mediating ubiquitination and degradation of GHR, following GHR phosphorylation by JAK2. The ECS(SOCS2) also catalyzes ubiquitination and degradation of JAK2-phosphorylated EPOR. The polypeptide is Suppressor of cytokine signaling 2 (Socs2) (Rattus norvegicus (Rat)).